We begin with the raw amino-acid sequence, 86 residues long: Large ribosomal subunit protein bL27 (86 aa).

Residues Met-1–Ser-26 are disordered.

This sequence belongs to the bacterial ribosomal protein bL27 family.

In Rickettsia prowazekii (strain Madrid E), this protein is Large ribosomal subunit protein bL27.